Here is a 341-residue protein sequence, read N- to C-terminus: uncharacterized protein (341 aa).

Belongs to the cycloisomerase 2 family.

This is an uncharacterized protein from Lactococcus lactis subsp. lactis (strain IL1403) (Streptococcus lactis).